The chain runs to 443 residues: Serine/threonine-protein phosphatase 2A 55 kDa regulatory subunit B beta isoform (443 aa).

WD repeat units lie at residues 22 to 61 (TEAD…KSQP), 87 to 128 (EIEE…KRPE), 171 to 209 (AHTY…RSFN), 220 to 260 (ELTE…LCDN), 279 to 317 (EIIS…KPLE), 334 to 375 (ENDC…DVTL), and 410 to 443 (DFSK…DKVN).

It belongs to the phosphatase 2A regulatory subunit B family. In terms of assembly, PP2A consists of a common heterodimeric core enzyme, composed of a 36 kDa catalytic subunit (subunit C) and a 65 kDa constant regulatory subunit (PR65 or subunit A), that associates with a variety of regulatory subunits.

It localises to the cytoplasm. The protein resides in the cytoskeleton. It is found in the membrane. The B regulatory subunit might modulate substrate selectivity and catalytic activity, and might also direct the localization of the catalytic enzyme to a particular subcellular compartment. This is Serine/threonine-protein phosphatase 2A 55 kDa regulatory subunit B beta isoform (ppp2r2b) from Carassius auratus (Goldfish).